A 475-amino-acid chain; its full sequence is Ataxin-10 (475 aa).

Residue R10 is modified to Omega-N-methylarginine. A phosphoserine mark is found at S12 and S77. Position 82 is a phosphothreonine (T82). S430 is subject to Phosphoserine.

Belongs to the ataxin-10 family. In terms of assembly, homooligomer. Interacts with GNB2. Interacts with IQCB1. Interacts with OGT. Interacts with PLK1. In terms of processing, polyubiquitinated. Phosphorylation at Ser-12 by AURKB promotes the association of ATXN10 with PLK1. Phosphorylation at Ser-77 and Thr-82 by PLK1 may play a role in the regulation of cytokinesis and may stimulate the proteasome-mediated degradation of ATXN10. As to expression, in high cell density areas; cerebellar cortex, dentate gyrus, hippocampus, anterior olfactory nucleus, primary olfactory cortex.

It is found in the cytoplasm. The protein localises to the perinuclear region. Its subcellular location is the midbody. It localises to the cytoskeleton. The protein resides in the cilium basal body. It is found in the microtubule organizing center. The protein localises to the centrosome. Its subcellular location is the centriole. May play a role in the regulation of cytokinesis. May play a role in signaling by stimulating protein glycosylation. Induces neuritogenesis by activating the Ras-MAP kinase pathway and is necessary for the survival of cerebellar neurons. Does not appear to play a major role in ciliogenesis. The polypeptide is Ataxin-10 (Atxn10) (Mus musculus (Mouse)).